The following is a 346-amino-acid chain: Holliday junction branch migration complex subunit RuvB (346 aa).

The interval 1 to 182 (MSEPARLISP…FGIPVRLSFY (182 aa)) is large ATPase domain (RuvB-L). ATP is bound by residues leucine 21, arginine 22, glycine 63, lysine 66, threonine 67, threonine 68, 129 to 131 (EDF), arginine 172, tyrosine 182, and arginine 219. Threonine 67 lines the Mg(2+) pocket. The tract at residues 183 to 253 (TVEELELIVR…IADEALTRLL (71 aa)) is small ATPAse domain (RuvB-S). Residues 256–346 (NVGFDQLDKR…AQFRLFQEDN (91 aa)) form a head domain (RuvB-H) region. DNA contacts are provided by arginine 292, arginine 311, and arginine 316.

This sequence belongs to the RuvB family. In terms of assembly, homohexamer. Forms an RuvA(8)-RuvB(12)-Holliday junction (HJ) complex. HJ DNA is sandwiched between 2 RuvA tetramers; dsDNA enters through RuvA and exits via RuvB. An RuvB hexamer assembles on each DNA strand where it exits the tetramer. Each RuvB hexamer is contacted by two RuvA subunits (via domain III) on 2 adjacent RuvB subunits; this complex drives branch migration. In the full resolvosome a probable DNA-RuvA(4)-RuvB(12)-RuvC(2) complex forms which resolves the HJ.

It is found in the cytoplasm. The enzyme catalyses ATP + H2O = ADP + phosphate + H(+). Functionally, the RuvA-RuvB-RuvC complex processes Holliday junction (HJ) DNA during genetic recombination and DNA repair, while the RuvA-RuvB complex plays an important role in the rescue of blocked DNA replication forks via replication fork reversal (RFR). RuvA specifically binds to HJ cruciform DNA, conferring on it an open structure. The RuvB hexamer acts as an ATP-dependent pump, pulling dsDNA into and through the RuvAB complex. RuvB forms 2 homohexamers on either side of HJ DNA bound by 1 or 2 RuvA tetramers; 4 subunits per hexamer contact DNA at a time. Coordinated motions by a converter formed by DNA-disengaged RuvB subunits stimulates ATP hydrolysis and nucleotide exchange. Immobilization of the converter enables RuvB to convert the ATP-contained energy into a lever motion, pulling 2 nucleotides of DNA out of the RuvA tetramer per ATP hydrolyzed, thus driving DNA branch migration. The RuvB motors rotate together with the DNA substrate, which together with the progressing nucleotide cycle form the mechanistic basis for DNA recombination by continuous HJ branch migration. Branch migration allows RuvC to scan DNA until it finds its consensus sequence, where it cleaves and resolves cruciform DNA. This chain is Holliday junction branch migration complex subunit RuvB, found in Rhizobium johnstonii (strain DSM 114642 / LMG 32736 / 3841) (Rhizobium leguminosarum bv. viciae).